We begin with the raw amino-acid sequence, 1018 residues long: MTERKAAAPRGPYGAWFCLLVALALEVVRVSSNHDTLDPIYLPVALELLDAPEHFRVQQVGHYPPANSSLASRSETFLLMQPWPRAQPLLRASYPPFATQQVVPPRVTEPHRRPVPWDVRAVSVEAAVTPAEPYARVLFHLKGQDWPPGPGSLPCARLHATHPAGTAHRACRFQPSLGACVVELQFPSHWFSQSATTRAELAYTLEPAGEGPGGCGLGTEEEPREQALPVGGVELHPEDPPQYQEVPLDEAVTLRAPDVPMRPGQLFTATLLLRHNFTASLLTLRIKVKKGLQVIAARPAQPTLWTAKLDRFKGSKHHTSLITCHRAGPAGPDSSPLELSEFLWVDFAVENSTGGGVAVTRPVTWQLEYPGQAPEAEKDKMVWEILVSERDIRALIPLAKAEELVNTAPLTGVPQRIPVRLVTVDSGGALEEVTEHIGCESANTQVLQVSEACDAVFVAGQESRGAKGVRVDFWWRRLRASLKLTVWAPLLPLRIELTDTTLEQIRGWRVPGSAEGQLEPETAAEEVERRSRGCRLQYQRAGVRFLVPFAAHPLDGGRRLTHLLGPDWLLDVSHLVAAHAHVQDPRIASLEGGRILVGREPGVTSIEVRSPLSDAILGEQALAVTDDKVSVLDLRVQPVMGISLSLSRGMSHPGEVTATCWAQSALPAPKQEVALSLWLSFSDHTLAPAELYDRNDLGLSVSAEEPSAVLPAEEQGAQLGVVVSGVGAEGLPLHVALHPPEPCRRGRHRVPLASGTAWLGLPPLPTPVPALPSSPVRTSPFTEATVEGKRQIAGDMGGHVGIRGKFERAEEEAGKEENEAKEEEEDEEEMVPAPQRVTDLELGMYALLGIFCLAILIFLVNGVVFVLRYQRKEPPDSATDPASPQPHNWVWLGTNQEELSRQLDRCSSSGPPKGEGGCPCESGAGGDASTVAPSASESPAGSSSTLARKEAGGRRKRVEFVTFAPAPPTQPPEEPVGAPAVQSILVAGEEDIRWVCEDMGLKDPEELRNYMERIRGSS.

An N-terminal signal peptide occupies residues 1 to 32 (MTERKAAAPRGPYGAWFCLLVALALEVVRVSS). The Extracellular portion of the chain corresponds to 33–846 (NHDTLDPIYL…VTDLELGMYA (814 aa)). N-linked (GlcNAc...) asparagine glycosylation is present at Asn-276. The interval 606 to 911 (IEVRSPLSDA…QLDRCSSSGP (306 aa)) is binds to HSPA5/GRP78. Residues 666 to 1018 (LPAPKQEVAL…NYMERIRGSS (353 aa)) form a confers cellular localization similar to full-length form region. Residues 807 to 818 (ERAEEEAGKEEN) show a composition bias toward basic and acidic residues. Residues 807–833 (ERAEEEAGKEENEAKEEEEDEEEMVPA) form a disordered region. Over residues 819–830 (EAKEEEEDEEEM) the composition is skewed to acidic residues. Residues 847–867 (LLGIFCLAILIFLVNGVVFVL) traverse the membrane as a helical segment. Residues 868–1018 (RYQRKEPPDS…NYMERIRGSS (151 aa)) are Cytoplasmic-facing. Residues 900-956 (SRQLDRCSSSGPPKGEGGCPCESGAGGDASTVAPSASESPAGSSSTLARKEAGGRRK) are disordered. Composition is skewed to low complexity over residues 906-922 (CSSS…PCES) and 932-944 (APSA…GSSS).

It belongs to the TMEM132 family. In terms of assembly, interacts with HSPA5/GRP78.

It is found in the golgi apparatus membrane. It localises to the endoplasmic reticulum membrane. In terms of biological role, may play a role in embryonic and postnatal development of the brain. Increased resistance to cell death induced by serum starvation in cultured cells. Regulates cAMP-induced GFAP gene expression via STAT3 phosphorylation. The sequence is that of Transmembrane protein 132A (Tmem132a) from Mus musculus (Mouse).